A 228-amino-acid chain; its full sequence is Urease accessory protein UreF 1 (228 aa).

Belongs to the UreF family. In terms of assembly, ureD, UreF and UreG form a complex that acts as a GTP-hydrolysis-dependent molecular chaperone, activating the urease apoprotein by helping to assemble the nickel containing metallocenter of UreC. The UreE protein probably delivers the nickel.

Its subcellular location is the cytoplasm. Required for maturation of urease via the functional incorporation of the urease nickel metallocenter. This is Urease accessory protein UreF 1 from Brucella canis (strain ATCC 23365 / NCTC 10854 / RM-666).